Consider the following 107-residue polypeptide: uncharacterized protein (107 aa).

The chain crosses the membrane as a helical span at residues 52 to 72 (LIIHDLFIYIFILNFFFFPFC).

The protein localises to the membrane. This is an uncharacterized protein from Saccharomyces cerevisiae (strain ATCC 204508 / S288c) (Baker's yeast).